The chain runs to 335 residues: Transcription factor bHLH63 (335 aa).

The interval 110 to 160 (MTMNRDDLVEEGEEEKSKITEQNNGSTKSIKKMKHKAKKEENNFSNDSSKV) is disordered. In terms of domain architecture, bHLH spans 178 to 228 (QATDSHSIAERVRREKISERMKFLQDLVPGCDKITGKAGMLDEIINYVQSL).

Homodimer. Interacts with IBH1. Binds reversibly to CRY2 after blue light illumination. In terms of tissue distribution, expressed constitutively in roots, leaves, and stems.

It localises to the nucleus. Functionally, transcription factor that binds DNA to G box 5'-CACGTG-3' and, to a lower extent, to E-box 5'-CANNTG-3' in vitro. Binds to chromatin DNA of the FT gene and promotes its expression, and thus triggers flowering in response to blue light. The chain is Transcription factor bHLH63 (BHLH63) from Arabidopsis thaliana (Mouse-ear cress).